The primary structure comprises 324 residues: Adipolin (324 aa).

A signal peptide spans 1–24 (MRCWVWLLVAIVLCQQLSVVRVLA). Disordered regions lie at residues 28–66 (ERKK…DPGL) and 83–121 (GANS…MPGA). Polar residues predominate over residues 40 to 49 (EPFNVSLSNS). An N-linked (GlcNAc...) asparagine glycan is attached at Asn-43. Basic and acidic residues predominate over residues 50 to 60 (EELHETDKLSE). The span at 86 to 98 (SKKKCKGKDKKLR) shows a compositional bias: basic residues. Over residues 103-118 (PPGPPGPQGPPGPPGM) the composition is skewed to pro residues. In terms of domain architecture, C1q spans 169–324 (YRRVDEGFHC…SDFMGILMGL (156 aa)).

Belongs to the adipolin/erythroferrone family. In terms of assembly, homomultimer; disulfide-linked.

The protein resides in the secreted. Insulin-sensitizing adipocyte-secreted protein (adipokine) that regulates glucose metabolism in liver and adipose tissue. The sequence is that of Adipolin (c1qtnf12) from Xenopus tropicalis (Western clawed frog).